The primary structure comprises 799 residues: Rho GTPase-activating protein gacI (799 aa).

The 226-residue stretch at 226–451 (IKLEEVFARE…LLVEHVLTIF (226 aa)) folds into the Rho-GAP domain. Residues 472–520 (RSQSDISSQTKPLPSLPTSPQNRSAIITGDSSSPSLNTPPVKSSLNSSD) are compositionally biased toward polar residues. 2 disordered regions span residues 472-572 (RSQS…PTSN) and 741-799 (EKQQ…LSNQ). The span at 525-549 (DNGSNNNNNNNTTNTITNNGIADTA) shows a compositional bias: low complexity. Over residues 550 to 568 (TPPPPTTPTAPTTPPPPTT) the composition is skewed to pro residues. 2 stretches are compositionally biased toward low complexity: residues 743–752 (QQQQQQQQTN) and 759–791 (ISSN…LNSS).

The protein resides in the cytoplasm. In terms of biological role, rho GTPase-activating protein involved in the signal transduction pathway. The protein is Rho GTPase-activating protein gacI (gacI) of Dictyostelium discoideum (Social amoeba).